The sequence spans 151 residues: Sec-independent protein translocase protein TatB (151 aa).

A helical membrane pass occupies residues 1–21 (MFDIGFLELLICGVIALLVLG). Composition is skewed to basic and acidic residues over residues 87-99 (KYEH…DQTR) and 122-132 (EPPHEPVRDEA). Residues 87-151 (KYEHMILPDD…SPTSPSDKYS (65 aa)) form a disordered region. The segment covering 134 to 151 (ASDQPSDSSPTSPSDKYS) has biased composition (low complexity).

The protein belongs to the TatB family. The Tat system comprises two distinct complexes: a TatABC complex, containing multiple copies of TatA, TatB and TatC subunits, and a separate TatA complex, containing only TatA subunits. Substrates initially bind to the TatABC complex, which probably triggers association of the separate TatA complex to form the active translocon.

It localises to the cell inner membrane. Functionally, part of the twin-arginine translocation (Tat) system that transports large folded proteins containing a characteristic twin-arginine motif in their signal peptide across membranes. Together with TatC, TatB is part of a receptor directly interacting with Tat signal peptides. TatB may form an oligomeric binding site that transiently accommodates folded Tat precursor proteins before their translocation. The chain is Sec-independent protein translocase protein TatB from Marinobacter nauticus (strain ATCC 700491 / DSM 11845 / VT8) (Marinobacter aquaeolei).